The chain runs to 457 residues: MSPCKLLPFCVALALTGCSLAPDYQRPAMPVPQQFSLSQNGLVNAADNYQNAGWRTFFVDNQVKTLISEALVNNRDLRMATLKVQEARAQYRLTDADRYPQLNGEGSGSWSGNLKGNTATTREFSTGLNASFDLDFFGRLKNMSEAERQNYLATEEAQRAVHILLVSNVAQSYFNQQLAYAQLQIAEETLRNYQQSYAFVEKQLLTGSSNVLALEQARGVIESTRSDIAKRQGELAQANNALQLLLGSYGKLPQAQTVNSDSLQSVKLPAGLSSQILLQRPDIMEAEHALMAANANIGAARAAFFPSISLTSGISTASSDLSSLFNASSGMWNFIPKIEIPIFNAGRNQANLDIAEIRQQQSVVNYEQKIQNAFKEVADALALRQSLNDQISAQQRYLASLQITLQRARALYQHGAVSYLEVLDAERSLFATRQTLLDLNYARQVNEISLYTALGGG.

An N-terminal signal peptide occupies residues 1–17 (MSPCKLLPFCVALALTG). C18 carries the N-palmitoyl cysteine lipid modification. C18 is lipidated: S-diacylglycerol cysteine.

This sequence belongs to the outer membrane factor (OMF) (TC 1.B.17) family. Homotrimer. Component of the cus efflux system composed of CusA, CusB, CusC and CusF.

It is found in the cell outer membrane. Its function is as follows. Forms pores that allow passive diffusion of cations across the outer membrane. Part of a cation efflux system that mediates resistance to copper and silver. In pathogenic strains it allows the bacteria to invade brain microvascular endothelial cells (BMEC) thus allowing it to cross the blood-brain barrier and cause neonatal meningitis. The polypeptide is Cation efflux system protein CusC (cusC) (Escherichia coli (strain K12)).